The sequence spans 324 residues: GDP-mannose transporter (324 aa).

The Cytoplasmic segment spans residues 1–13 (MSELKSRIGNSGS). Residues 14–34 (IANSGPVSILCYCASSILMTV) form a helical membrane-spanning segment. The Lumenal segment spans residues 35-44 (TNKFVVNTDG). Residues 45-65 (FNMFFVMLFAQSLVCTMCLMV) traverse the membrane as a helical segment. Topologically, residues 66 to 76 (LKMFGYAKYRP) are cytoplasmic. Residues 77 to 97 (LNLIDVKNWLPISFLLVFMIF) traverse the membrane as a helical segment. At 98–116 (TSAKALKYMPVPIYTIFKN) the chain is on the lumenal side. Asn116 is a glycosylation site (N-linked (GlcNAc...) asparagine). Residues 117–137 (LTIILIAYGEVLFFGGSVTPM) traverse the membrane as a helical segment. Residue Glu138 is a topological domain, cytoplasmic. The helical transmembrane segment at 139–159 (LSSFILMVLSSVVASLGDQQA) threads the bilayer. Residues 160 to 170 (AKIAQPLANNS) lie on the Lumenal side of the membrane. Residue Asn168 is glycosylated (N-linked (GlcNAc...) asparagine). Residues 171 to 191 (ILSPEYYWMFLNCICSASFVL) traverse the membrane as a helical segment. At 192–204 (IMRKRIKLTNFKD) the chain is on the cytoplasmic side. The helical transmembrane segment at 205 to 225 (YDTMFYNNALALPILLGFSFL) threads the bilayer. Residues 226 to 243 (SEDWSSENLAQNFSGESL) lie on the Lumenal side of the membrane. A glycan (N-linked (GlcNAc...) asparagine) is linked at Asn237. Residues 244-264 (SAMIISGMTSVGISYCSGWCV) form a helical membrane-spanning segment. Residues 265–270 (RATSST) lie on the Cytoplasmic side of the membrane. Residues 271 to 291 (TYSMVGALNKLPIALAGLIFF) form a helical membrane-spanning segment. Residues 292-295 (DAPR) are Lumenal-facing. The helical transmembrane segment at 296-316 (NFLSIMSIFIGFASGLSYAVA) threads the bilayer. The Cytoplasmic portion of the chain corresponds to 317 to 324 (KQKKVQKN).

The protein belongs to the TPT transporter family. SLC35D subfamily. In terms of assembly, homooligomer.

The protein resides in the golgi apparatus membrane. It localises to the cytoplasmic vesicle membrane. The protein localises to the endoplasmic reticulum membrane. In terms of biological role, involved in the import of GDP-mannose from the cytoplasm into the Golgi lumen. This chain is GDP-mannose transporter (VRG4), found in Candida glabrata (strain ATCC 2001 / BCRC 20586 / JCM 3761 / NBRC 0622 / NRRL Y-65 / CBS 138) (Yeast).